We begin with the raw amino-acid sequence, 807 residues long: Tyrosine-protein kinase receptor torso (807 aa).

Positions 1–28 are cleaved as a signal peptide; sequence MYSEGKLLKVFLIFAGFIIFSLCGEVVS. Residues 29-370 lie on the Extracellular side of the membrane; it reads QRYPPAPGLL…RAFTPGMLRW (342 aa). Intrachain disulfides connect Cys-46–Cys-61, Cys-81–Cys-203, Cys-210–Cys-239, and Cys-259–Cys-265. N-linked (GlcNAc...) asparagine glycosylation is found at Asn-54, Asn-171, Asn-183, and Asn-195. N-linked (GlcNAc...) asparagine glycosylation is found at Asn-307, Asn-323, and Asn-344. Residues 371–391 form a helical membrane-spanning segment; that stretch reads VWAGATAGAGCAAGGLLAATL. Residues 392–807 are Cytoplasmic-facing; the sequence is LCCGHRRATS…SPPVIQTKTA (416 aa). The Protein kinase domain maps to 439–738; that stretch reads VLLHEVIGEG…PTFPELHQKL (300 aa). ATP contacts are provided by residues 445–453 and Lys-468; that span reads IGEGAFGVV. The active-site Proton acceptor is the Asp-607.

Belongs to the protein kinase superfamily. Tyr protein kinase family. Homodimer; disulfide-linked. It depends on Mg(2+) as a cofactor. May be auto-phosphorylated on tyrosine residues. In terms of processing, at least one of the 3 cysteine residues Cys-381, Cys-393 or Cys-394 is involved in the formation of interchain disulfide bonds. The disulfide bond sites in the extracellular region are not involved in homodimer formation.

The protein resides in the cell membrane. It carries out the reaction L-tyrosyl-[protein] + ATP = O-phospho-L-tyrosyl-[protein] + ADP + H(+). In terms of biological role, probable receptor tyrosine kinase. During postembryonic development, involved in the initiation of metamorphosis probably by inducing the production of ecdysone in response to prothoracicotropic hormone (PTTH). Binding to PTTH stimulates activation of canonical MAPK signaling leading to ERK phosphorylation. The polypeptide is Tyrosine-protein kinase receptor torso (Bombyx mori (Silk moth)).